We begin with the raw amino-acid sequence, 496 residues long: Ammonium transporter 1 member 2 (496 aa).

Helical transmembrane passes span 39–59 (LLFS…LCAG), 74–94 (VLDA…FAFG), 120–140 (FFLF…GSIA), 148–168 (YLIY…HWIW), 192–212 (FAGS…GALI), 236–256 (LVVL…PGSF), 274–296 (SAVG…TTLF), 307–327 (VIDV…GCSV), 331–351 (WAAI…NALA), 360–380 (LEAA…TALF), and 412–432 (IVVI…LFLV).

This sequence belongs to the ammonia transporter channel (TC 1.A.11.2) family. As to expression, expressed in exodermis, sclerenchyma, endodermis and pericycle cells of primary root tips.

It localises to the membrane. In terms of biological role, ammonium transporter probably involved in ammonium uptake from the soil and ammonium uptake and retrieval in the vascular system. This is Ammonium transporter 1 member 2 (AMT1-2) from Oryza sativa subsp. japonica (Rice).